Consider the following 299-residue polypeptide: GTPase Era (299 aa).

In terms of domain architecture, Era-type G spans lysine 4–glutamate 171. Residues glycine 12 to serine 19 are G1. Glycine 12–serine 19 contacts GTP. The tract at residues glutamine 38–asparagine 42 is G2. Residues aspartate 59–glycine 62 form a G3 region. Residues aspartate 59–isoleucine 63 and asparagine 121–aspartate 124 contribute to the GTP site. The G4 stretch occupies residues asparagine 121–aspartate 124. The tract at residues isoleucine 150 to alanine 152 is G5. The KH type-2 domain occupies threonine 202–lysine 280.

It belongs to the TRAFAC class TrmE-Era-EngA-EngB-Septin-like GTPase superfamily. Era GTPase family. As to quaternary structure, monomer.

The protein resides in the cytoplasm. The protein localises to the cell membrane. An essential GTPase that binds both GDP and GTP, with rapid nucleotide exchange. Plays a role in 16S rRNA processing and 30S ribosomal subunit biogenesis and possibly also in cell cycle regulation and energy metabolism. The sequence is that of GTPase Era from Streptococcus pneumoniae (strain JJA).